The sequence spans 333 residues: DNA-directed RNA polymerase subunit alpha (333 aa).

The alpha N-terminal domain (alpha-NTD) stretch occupies residues Met-1 to Glu-233. Positions Lys-266–Pro-333 are alpha C-terminal domain (alpha-CTD).

Belongs to the RNA polymerase alpha chain family. As to quaternary structure, in plastids the minimal PEP RNA polymerase catalytic core is composed of four subunits: alpha, beta, beta', and beta''. When a (nuclear-encoded) sigma factor is associated with the core the holoenzyme is formed, which can initiate transcription.

It is found in the plastid. The protein resides in the chloroplast. The enzyme catalyses RNA(n) + a ribonucleoside 5'-triphosphate = RNA(n+1) + diphosphate. Functionally, DNA-dependent RNA polymerase catalyzes the transcription of DNA into RNA using the four ribonucleoside triphosphates as substrates. In Lotus japonicus (Lotus corniculatus var. japonicus), this protein is DNA-directed RNA polymerase subunit alpha.